Consider the following 405-residue polypeptide: Exodeoxyribonuclease 7 large subunit (405 aa).

The protein belongs to the XseA family. In terms of assembly, heterooligomer composed of large and small subunits.

It localises to the cytoplasm. It carries out the reaction Exonucleolytic cleavage in either 5'- to 3'- or 3'- to 5'-direction to yield nucleoside 5'-phosphates.. In terms of biological role, bidirectionally degrades single-stranded DNA into large acid-insoluble oligonucleotides, which are then degraded further into small acid-soluble oligonucleotides. In Syntrophomonas wolfei subsp. wolfei (strain DSM 2245B / Goettingen), this protein is Exodeoxyribonuclease 7 large subunit.